The following is a 260-amino-acid chain: Ribosomal RNA small subunit methyltransferase A (260 aa).

5 residues coordinate S-adenosyl-L-methionine: L23, G48, E69, D94, and N110.

Belongs to the class I-like SAM-binding methyltransferase superfamily. rRNA adenine N(6)-methyltransferase family. RsmA subfamily.

It is found in the cytoplasm. The enzyme catalyses adenosine(1518)/adenosine(1519) in 16S rRNA + 4 S-adenosyl-L-methionine = N(6)-dimethyladenosine(1518)/N(6)-dimethyladenosine(1519) in 16S rRNA + 4 S-adenosyl-L-homocysteine + 4 H(+). Specifically dimethylates two adjacent adenosines (A1518 and A1519) in the loop of a conserved hairpin near the 3'-end of 16S rRNA in the 30S particle. May play a critical role in biogenesis of 30S subunits. The chain is Ribosomal RNA small subunit methyltransferase A from Thermotoga petrophila (strain ATCC BAA-488 / DSM 13995 / JCM 10881 / RKU-1).